A 2541-amino-acid polypeptide reads, in one-letter code: Talin-1 (2541 aa).

The 318-residue stretch at 86–403 (RPLKIRMLDG…GYIDIILKKK (318 aa)) folds into the FERM domain. T167 carries the post-translational modification Phosphothreonine. The segment at 280-435 (FQAHKNCGQM…PKKSTVLQQQ (156 aa)) is interaction with LAYN. A phosphoserine mark is found at S405, S425, S446, S620, and S729. The interval 482–655 (RGHMPPLTSA…QASGELLQQI (174 aa)) is helical bundle R1. The helical bundle R2 stretch occupies residues 656 to 786 (GESDTDPHFQ…ALNELLQHVK (131 aa)). Positions 787 to 911 (AHATGAGPAG…NAAAQNAIKK (125 aa)) are helical bundle R3. Residues 913 to 1044 (LVQRLEHAAK…RTAAQKAQEA (132 aa)) form a helical bundle R4 region. Phosphoserine is present on S1021. Residues 1046 to 1206 (GPLEMDSALS…NRCVSCLPGQ (161 aa)) are helical bundle R5. A Phosphotyrosine modification is found at Y1116. Phosphothreonine is present on T1142. Residues S1201 and S1225 each carry the phosphoserine modification. The tract at residues 1207–1357 (RDVDNALRAV…QLITMCTQQA (151 aa)) is helical bundle R6. T1263 bears the Phosphothreonine mark. The residue at position 1323 (S1323) is a Phosphoserine. The interaction with SYNM stretch occupies residues 1327–1948 (AAPNLKSQLA…CSPSDAYTKK (622 aa)). The interval 1358-1453 (PGQKECDNAL…AYLVGVSDPN (96 aa)) is helical bundle R7A. The interval 1359–1659 (GQKECDNALR…SMRDKAPGQL (301 aa)) is interaction with VCL and F-actin. The tract at residues 1461–1580 (LVEPTQFARA…NLSAFASNPE (120 aa)) is helical bundle R8. Position 1544 is an N6-acetyllysine (K1544). The helical bundle R7B stretch occupies residues 1581 to 1653 (FSSIPAQISP…IKKLITSMRD (73 aa)). The segment at 1655–1822 (APGQLECETA…TLNEAASAAG (168 aa)) is helical bundle R9. A helical bundle R10 region spans residues 1823-1973 (VVGGMVDSIT…VLAALQAGNR (151 aa)). S1849 carries the post-translational modification Phosphoserine. T1855 is subject to Phosphothreonine. Phosphoserine is present on S1878. The interval 1974–2140 (GTQACITAAS…TVKAVEDEAT (167 aa)) is helical bundle R11. K2031 bears the N6-acetyllysine mark. S2040 carries the phosphoserine modification. K2115 is subject to N6-acetyllysine. The helical bundle R12 stretch occupies residues 2141–2294 (KGTRALEATT…QAAEAMKGTE (154 aa)). The 241-residue stretch at 2293–2533 (TEWVDPEDPT…QIRQQQYKFL (241 aa)) folds into the I/LWEQ domain. The helical bundle R13 stretch occupies residues 2300–2482 (DPTVIAENEL…AAQKAAAFEE (183 aa)).

In terms of assembly, part of a complex composed of THSD1, PTK2/FAK1, TLN1 and VCL. Interacts with THSD1; this promotes interaction with PTK2/FAK1 and VCL. Binds with high affinity to VCL and with low affinity to integrins. Interacts with APBB1IP; this inhibits VCL binding. Interacts with PTK2/FAK1. Interacts with PIP5K1C and NRAP. Interacts with LAYN. Interacts with SYNM. Interacts with ITGB1; the interaction is prevented by competitive binding of ITGB1BP1. Interacts with SVEP1. Interacts (via R7 domain) with KANK1 or KANK2 (via KN motif); this interaction likely initiates the assembly of cortical microtubule stabilization complexes (CMSCs) at the vicinity of focal adhesions. Interacts with VCL; shows reduced VCL binding compared to isoform 2. Interacts with APBB1IP; shows similar level of binding compared to isoform 2. As to quaternary structure, interacts with VCL; shows enhanced VCL binding compared to isoform 1. Interacts with APBB1IP; shows similar level of binding compared to isoform 1. In terms of assembly, (Microbial infection) Interacts with human cytomegalovirus protein UL135. In terms of tissue distribution, expressed at low to non-detectable levels in many tissues but highly expressed in skin and pancreas with other tissues including kidney cortex, endocervix, testis, pituitary, liver, and spleen also showing robust expression.

It is found in the cell projection. The protein localises to the ruffle membrane. Its subcellular location is the cytoplasm. It localises to the cytoskeleton. The protein resides in the cell surface. It is found in the cell junction. The protein localises to the focal adhesion. Functionally, high molecular weight cytoskeletal protein concentrated at regions of cell-matrix and cell-cell contacts. Involved in connections of major cytoskeletal structures to the plasma membrane. With KANK1 co-organize the assembly of cortical microtubule stabilizing complexes (CMSCs) positioned to control microtubule-actin crosstalk at focal adhesions (FAs) rims. The chain is Talin-1 (TLN1) from Homo sapiens (Human).